Reading from the N-terminus, the 204-residue chain is Phosphoheptose isomerase (204 aa).

The SIS domain occupies 38 to 199 (MAVALARGGK…LFEAVMELGP (162 aa)). Residue 53–55 (NGG) coordinates substrate. Positions 62 and 66 each coordinate Zn(2+). Residues glutamate 66, 95–96 (ND), 121–123 (STS), serine 126, and glutamine 172 contribute to the substrate site. Residues glutamine 172 and histidine 180 each contribute to the Zn(2+) site.

This sequence belongs to the SIS family. GmhA subfamily. In terms of assembly, homotetramer. Zn(2+) serves as cofactor.

The protein localises to the cytoplasm. It carries out the reaction 2 D-sedoheptulose 7-phosphate = D-glycero-alpha-D-manno-heptose 7-phosphate + D-glycero-beta-D-manno-heptose 7-phosphate. Its pathway is carbohydrate biosynthesis; D-glycero-D-manno-heptose 7-phosphate biosynthesis; D-glycero-alpha-D-manno-heptose 7-phosphate and D-glycero-beta-D-manno-heptose 7-phosphate from sedoheptulose 7-phosphate: step 1/1. Catalyzes the isomerization of sedoheptulose 7-phosphate in D-glycero-D-manno-heptose 7-phosphate. The protein is Phosphoheptose isomerase of Solidesulfovibrio magneticus (strain ATCC 700980 / DSM 13731 / RS-1) (Desulfovibrio magneticus).